The primary structure comprises 448 residues: RNA-binding protein 42 (448 aa).

The segment at 1 to 29 (MAGAGPAPGLPGAGGPVVPGPGAGIPGKS) is disordered. Ala-2 carries the N-acetylalanine modification. Residues 11–27 (PGAGGPVVPGPGAGIPG) show a composition bias toward gly residues. Ser-132 is modified (phosphoserine). An Asymmetric dimethylarginine modification is found at Arg-149. A necessary for interaction with HNRNPK region spans residues 204–448 (ELGLGLGLGL…QKEKKKLGLR (245 aa)). A disordered region spans residues 286–324 (LSLRPRPRPPRPEPPPGLMALEVPEPLSEDKKKGKPEKL). The segment covering 313–324 (SEDKKKGKPEKL) has biased composition (basic and acidic residues). An RRM domain is found at 349 to 427 (FRIFCGDLGN…RPIKLRKSMW (79 aa)).

Belongs to the RRM RBM42 family. In terms of assembly, interacts with HNRNPK.

The protein localises to the nucleus. It is found in the cytoplasm. Its function is as follows. Binds (via the RRM domain) to the 3'-untranslated region (UTR) of CDKN1A mRNA. This is RNA-binding protein 42 (RBM42) from Bos taurus (Bovine).